A 288-amino-acid polypeptide reads, in one-letter code: Bifunctional protein FolD (288 aa).

NADP(+) contacts are provided by residues 166-168 (GAS) and isoleucine 232.

This sequence belongs to the tetrahydrofolate dehydrogenase/cyclohydrolase family. Homodimer.

The catalysed reaction is (6R)-5,10-methylene-5,6,7,8-tetrahydrofolate + NADP(+) = (6R)-5,10-methenyltetrahydrofolate + NADPH. The enzyme catalyses (6R)-5,10-methenyltetrahydrofolate + H2O = (6R)-10-formyltetrahydrofolate + H(+). It participates in one-carbon metabolism; tetrahydrofolate interconversion. Catalyzes the oxidation of 5,10-methylenetetrahydrofolate to 5,10-methenyltetrahydrofolate and then the hydrolysis of 5,10-methenyltetrahydrofolate to 10-formyltetrahydrofolate. This Yersinia pseudotuberculosis serotype O:1b (strain IP 31758) protein is Bifunctional protein FolD.